Consider the following 1704-residue polypeptide: Type-2 histone deacetylase 2 (1704 aa).

Disordered stretches follow at residues 1 to 303 (MSTN…SEER), 315 to 383 (TQGS…TSKK), and 540 to 634 (QFLQ…IGNS). Low complexity predominate over residues 15-69 (TTITNESNTDNNNNNNDDNKNNTENTTSPTNNNNTNDNDNNSDNNNNKNNNNNNS). Residues 70-81 (QVTEEQQVTLED) are compositionally biased toward polar residues. Residues 97-113 (DSAEEDEDEMEDDDEDA) show a composition bias toward acidic residues. Polar residues predominate over residues 134 to 153 (KVQQSTNTHLSQTTPESPTI). Over residues 165–176 (STSTNNTPNTQS) the composition is skewed to low complexity. Positions 186–195 (LTSDEEKDLM) are enriched in basic and acidic residues. Over residues 196–210 (LSEESDGGVGEDDDS) the composition is skewed to acidic residues. Residues 222-286 (NQSNQNQNNN…SNNDNNNNNN (65 aa)) show a composition bias toward low complexity. Residues 315–325 (TQGSSTTTSDP) show a composition bias toward polar residues. Positions 326-351 (NNQNNQINQINQNNQNNQNNQNNQNN) are enriched in low complexity. A compositionally biased stretch (acidic residues) spans 354-369 (GEEEFGEEFEEEEEDM). The span at 372–382 (PKKKTKYKTSK) shows a compositional bias: basic residues. 2 stretches are compositionally biased toward low complexity: residues 540 to 549 (QFLQQQQQQQ) and 561 to 580 (NSNN…NNNS). The segment covering 608-620 (YETRKYTKKRNDE) has biased composition (basic and acidic residues). Substrate-binding residues include Asp-1165 and Gly-1227. 3 residues coordinate a divalent metal cation: Asp-1256, His-1258, and Asp-1350. Residues 1485-1704 (QLERQKQLQQ…TPQNINNSDN (220 aa)) form a disordered region. Over residues 1491-1616 (QLQQQQQQAQ…NNSNNNNNMN (126 aa)) the composition is skewed to low complexity. Positions 1649-1669 (LSPNSVNRGNNPSNISMSGAQ) are enriched in polar residues. The segment covering 1677–1698 (SPKPSNSPNSPSTSNNNGTPQN) has biased composition (low complexity).

Belongs to the histone deacetylase family. HD type 2 subfamily.

Its subcellular location is the nucleus. It is found in the cytoplasm. It catalyses the reaction N(6)-acetyl-L-lysyl-[histone] + H2O = L-lysyl-[histone] + acetate. Functionally, responsible for the deacetylation of lysine residues on the N-terminal part of the core histones (H2A, H2B, H3 and H4). Histone deacetylation plays an important role in transcriptional regulation, cell cycle progression and developmental events. Histone deacetylases act via the formation of large multiprotein complexes. This is Type-2 histone deacetylase 2 (hdaC) from Dictyostelium discoideum (Social amoeba).